We begin with the raw amino-acid sequence, 25 residues long: Gastrin-releasing peptide (25 aa).

Position 25 is a methionine amide (Met-25).

This sequence belongs to the bombesin/neuromedin-B/ranatensin family.

The protein localises to the secreted. The protein resides in the cytoplasmic vesicle. It localises to the secretory vesicle lumen. Its function is as follows. Stimulates the release of gastrin and other gastrointestinal hormones. The sequence is that of Gastrin-releasing peptide (grp) from Scyliorhinus canicula (Small-spotted catshark).